The sequence spans 132 residues: Large ribosomal subunit protein uL24 (132 aa).

The protein belongs to the universal ribosomal protein uL24 family. In terms of assembly, part of the 50S ribosomal subunit.

One of two assembly initiator proteins, it binds directly to the 5'-end of the 23S rRNA, where it nucleates assembly of the 50S subunit. In terms of biological role, one of the proteins that surrounds the polypeptide exit tunnel on the outside of the subunit. The polypeptide is Large ribosomal subunit protein uL24 (Synechococcus sp. (strain JA-2-3B'a(2-13)) (Cyanobacteria bacterium Yellowstone B-Prime)).